Consider the following 468-residue polypeptide: Putative magnesium transporter MRS2-G (468 aa).

Disordered regions lie at residues 1–76 and 183–204; these read MGRR…AGKV and GQPG…QVPR. Low complexity-rich tracts occupy residues 14-23 and 31-45; these read ASNASTSSST and RLPS…SSPS. Residues 46 to 67 are compositionally biased toward pro residues; sequence PASPSPPPPSASHPAPPSPPLA. Basic and acidic residues predominate over residues 187 to 201; sequence GDDHGEKHDDSHGDQ. Transmembrane regions (helical) follow at residues 402–422 and 437–457; these read LTLT…GAFA and FFWP…IVLL.

The protein belongs to the CorA metal ion transporter (MIT) (TC 1.A.35.5) family. Interacts with CYCB2-2.

It localises to the membrane. In terms of biological role, putative magnesium transporter. The protein is Putative magnesium transporter MRS2-G (MRS2-G) of Oryza sativa subsp. japonica (Rice).